The primary structure comprises 463 residues: NADH dehydrogenase [ubiquinone] iron-sulfur protein 2, mitochondrial (463 aa).

A mitochondrion-targeting transit peptide spans 1–33; the sequence is MAALRALGGLRGVAAQVLRPGAGVRLPIQPSRG. The residue at position 62 (Lys-62) is an N6-acetyllysine. Arg-118 is subject to Symmetric dimethylarginine. [4Fe-4S] cluster-binding residues include Cys-326, Cys-332, and Cys-347.

This sequence belongs to the complex I 49 kDa subunit family. As to quaternary structure, core subunit of respiratory chain NADH dehydrogenase (Complex I) which is composed of 45 different subunits. Component of the iron-sulfur (IP) fragment of the enzyme. Interacts with NDUFAF3. Interacts with NDUFAF7. Interacts with CERS2. Requires [4Fe-4S] cluster as cofactor. Dimethylation at Arg-118 by NDUFAF7 takes place after NDUFS2 assembles into the complex I, leading to stabilize the early intermediate complex.

The protein localises to the mitochondrion inner membrane. The catalysed reaction is a ubiquinone + NADH + 5 H(+)(in) = a ubiquinol + NAD(+) + 4 H(+)(out). Its function is as follows. Core subunit of the mitochondrial membrane respiratory chain NADH dehydrogenase (Complex I) which catalyzes electron transfer from NADH through the respiratory chain, using ubiquinone as an electron acceptor. Essential for the catalytic activity and assembly of complex I. Redox-sensitive, critical component of the oxygen-sensing pathway in the pulmonary vasculature which plays a key role in acute pulmonary oxygen-sensing and hypoxic pulmonary vasoconstriction. Plays an important role in carotid body sensing of hypoxia. Essential for glia-like neural stem and progenitor cell proliferation, differentiation and subsequent oligodendrocyte or neuronal maturation. The polypeptide is NADH dehydrogenase [ubiquinone] iron-sulfur protein 2, mitochondrial (NDUFS2) (Pongo pygmaeus (Bornean orangutan)).